A 321-amino-acid chain; its full sequence is Small ribosomal subunit biogenesis GTPase RsgA (321 aa).

Residues 89 to 248 (QSWINRPPVA…VADTPGFNRP (160 aa)) form the CP-type G domain. GTP-binding positions include 138–141 (TKRD) and 190–198 (GPSGVGKTS). Zn(2+)-binding residues include Cys273, Cys278, His280, and Cys286.

This sequence belongs to the TRAFAC class YlqF/YawG GTPase family. RsgA subfamily. As to quaternary structure, monomer. Associates with 30S ribosomal subunit, binds 16S rRNA. The cofactor is Zn(2+).

The protein resides in the cytoplasm. One of several proteins that assist in the late maturation steps of the functional core of the 30S ribosomal subunit. Helps release RbfA from mature subunits. May play a role in the assembly of ribosomal proteins into the subunit. Circularly permuted GTPase that catalyzes slow GTP hydrolysis, GTPase activity is stimulated by the 30S ribosomal subunit. This chain is Small ribosomal subunit biogenesis GTPase RsgA, found in Prochlorococcus marinus (strain MIT 9303).